The following is a 407-amino-acid chain: Putative glucose/galactose transporter (407 aa).

The next 12 membrane-spanning stretches (helical) occupy residues 11–31, 47–67, 70–90, 96–116, 139–159, 180–200, 225–245, 263–283, 300–320, 321–341, 349–369, and 378–398; these read GSLT…DILI, LIQF…GNVI, IGYP…CALF, FGSY…IVCL, VQAF…LLIF, VQMP…VMYL, FVFG…IGSF, HYLV…SALM, IILI…ALTF, VGFF…LNLG, GVIS…GVVT, and NLLY…FFAL.

The protein belongs to the major facilitator superfamily. FHS transporter (TC 2.A.1.7) family.

It localises to the cell inner membrane. Functionally, intake of glucose and galactose. This chain is Putative glucose/galactose transporter (gluP), found in Helicobacter pylori (strain J99 / ATCC 700824) (Campylobacter pylori J99).